The following is a 721-amino-acid chain: Glucans biosynthesis glucosyltransferase H (721 aa).

Helical transmembrane passes span 53-75, 85-107, 404-426, 456-478, 490-512, and 567-589; these read VLIM…QVLQ, VVLV…ALAG, GIGA…LISL, WVFA…LVLI, LRTF…VMMV, and WPLL…VALL.

The protein belongs to the glycosyltransferase 2 family. OpgH subfamily.

It localises to the cell inner membrane. Its pathway is glycan metabolism; osmoregulated periplasmic glucan (OPG) biosynthesis. Involved in the biosynthesis of osmoregulated periplasmic glucans (OPGs). This Rhodopseudomonas palustris (strain ATCC BAA-98 / CGA009) protein is Glucans biosynthesis glucosyltransferase H.